The primary structure comprises 712 residues: Polyadenylation factor subunit 2 (712 aa).

Positions 1 to 37 (MTAPTVPADQHGHPLPGPADPAANDTWRPSRYREPLH) are disordered. 7 WD repeats span residues 131–170 (KERSPTRVVRWTPDARRLLTGNDKGQFTLWNGASFNYESI), 173–213 (VHDD…HGFQ), 214–253 (GHREACHDVSWSPNDERFVTCGDDGLVKIWSYREAKEERS), 256–295 (GHGWDVRCVDWHPTKGLIVSGSKDMLVKFWDPRTGKDLST), 298–337 (SSKSTINTCRWSPDGHLVATAGQDSVIRLFDIRTFRELEV), 340–380 (GHEK…PSTP), and 387–426 (AHEDAVFSLSFHPLGHILCSGSKDFTARFWCRARPPGGQE). Disordered stretches follow at residues 446–473 (TKREWGTNAPPANAAGGGGGGGGDKQQV) and 489–712 (KTGP…DGRR). Composition is skewed to gly residues over residues 460-469 (AGGGGGGGGD) and 494-504 (TTGGGPSGLPG). A compositionally biased stretch (low complexity) spans 533–545 (QGQAQGGQFPRGR). Over residues 565-592 (FADRDRNGGGDRGGMDRDRDSRGGRQDP) the composition is skewed to basic and acidic residues. 2 stretches are compositionally biased toward pro residues: residues 603–612 (GGPPPGPPPG) and 619–671 (PPAP…PQGP). The segment covering 678–712 (GGQGNYGASASGGYGQYGGGGGGGGGGGYGRDGRR) has biased composition (gly residues).

It is found in the nucleus. Functionally, required for 3'-end cleavage and polyadenylation of pre-mRNAs. Also involved in chromosome segregation where it has a role in chromosome attachment to the mitotic spindle. This Cryptococcus neoformans var. neoformans serotype D (strain JEC21 / ATCC MYA-565) (Filobasidiella neoformans) protein is Polyadenylation factor subunit 2 (PFS2).